The chain runs to 48 residues: Large ribosomal subunit protein bL33A (48 aa).

It belongs to the bacterial ribosomal protein bL33 family.

The chain is Large ribosomal subunit protein bL33A from Bacillus mycoides (strain KBAB4) (Bacillus weihenstephanensis).